Consider the following 181-residue polypeptide: Ribonuclease HII (181 aa).

An RNase H type-2 domain is found at 1 to 181; it reads MICGIDEVGR…SLHRKNFKLI (181 aa). A divalent metal cation contacts are provided by D6, E7, and D98.

This sequence belongs to the RNase HII family. The cofactor is Mn(2+). Mg(2+) serves as cofactor.

The protein resides in the cytoplasm. It carries out the reaction Endonucleolytic cleavage to 5'-phosphomonoester.. In terms of biological role, endonuclease that specifically degrades the RNA of RNA-DNA hybrids. This chain is Ribonuclease HII, found in Borreliella burgdorferi (strain ZS7) (Borrelia burgdorferi).